The primary structure comprises 138 residues: Glutaredoxin-like protein C5orf63 (138 aa).

Cysteine 41 and cysteine 44 are disulfide-bonded. The segment covering 55-64 (ENRQPYKDQK) has biased composition (basic and acidic residues). A disordered region spans residues 55–88 (ENRQPYKDQKLPGTRRRRSPSSPSHPHMASQSGK).

The protein belongs to the glutaredoxin family. YDR286C subfamily.

The chain is Glutaredoxin-like protein C5orf63 (C5orf63) from Homo sapiens (Human).